Consider the following 274-residue polypeptide: Proteasome subunit beta (274 aa).

The propeptide at 1–52 is removed in mature form; by autocatalysis; that stretch reads MADPLGAAGRLPAVFMTPGTSSFADFLSRSAPHLLPGARSGLPGPVTEVAHG. The active-site Nucleophile is T53.

It belongs to the peptidase T1B family. The 20S proteasome core is composed of 14 alpha and 14 beta subunits that assemble into four stacked heptameric rings, resulting in a barrel-shaped structure. The two inner rings, each composed of seven catalytic beta subunits, are sandwiched by two outer rings, each composed of seven alpha subunits. The catalytic chamber with the active sites is on the inside of the barrel. Has a gated structure, the ends of the cylinder being occluded by the N-termini of the alpha-subunits. Is capped by the proteasome-associated ATPase, ARC.

The protein localises to the cytoplasm. The catalysed reaction is Cleavage of peptide bonds with very broad specificity.. It participates in protein degradation; proteasomal Pup-dependent pathway. Its activity is regulated as follows. The formation of the proteasomal ATPase ARC-20S proteasome complex, likely via the docking of the C-termini of ARC into the intersubunit pockets in the alpha-rings, may trigger opening of the gate for substrate entry. Interconversion between the open-gate and close-gate conformations leads to a dynamic regulation of the 20S proteasome proteolysis activity. Component of the proteasome core, a large protease complex with broad specificity involved in protein degradation. The polypeptide is Proteasome subunit beta (Frankia casuarinae (strain DSM 45818 / CECT 9043 / HFP020203 / CcI3)).